The sequence spans 34 residues: Hemopexin (34 aa).

The disordered stretch occupies residues 1–25 (RPLTQHKPHTPGDEHPHGAEPPGXD).

Belongs to the hemopexin family. Expressed by the liver and secreted in plasma.

It is found in the secreted. Functionally, binds heme and transports it to the liver for breakdown and iron recovery, after which the free hemopexin returns to the circulation. This Gallus gallus (Chicken) protein is Hemopexin (HPX).